The primary structure comprises 360 residues: Mannonate dehydratase (360 aa).

The protein belongs to the mannonate dehydratase family. Requires Fe(2+) as cofactor. It depends on Mn(2+) as a cofactor.

The catalysed reaction is D-mannonate = 2-dehydro-3-deoxy-D-gluconate + H2O. Its pathway is carbohydrate metabolism; pentose and glucuronate interconversion. Its function is as follows. Catalyzes the dehydration of D-mannonate. The chain is Mannonate dehydratase from Thermotoga sp. (strain RQ2).